A 491-amino-acid polypeptide reads, in one-letter code: Peptidoglycan D,D-transpeptidase PbpA (491 aa).

Residues 1-7 (MNASLRR) are Cytoplasmic-facing. A helical; Signal-anchor for type II membrane protein transmembrane segment spans residues 8-28 (ISVTVMALIVLLLLNATMTQV). Topologically, residues 29–491 (FTADGLRADP…VIEAALQGEP (463 aa)) are periplasmic. The transpeptidase stretch occupies residues 160-484 (GAVVALEPST…AAPIGRAVIE (325 aa)). Serine 222 functions as the Acyl-ester intermediate in the catalytic mechanism.

It belongs to the transpeptidase family.

It is found in the cell inner membrane. It carries out the reaction Preferential cleavage: (Ac)2-L-Lys-D-Ala-|-D-Ala. Also transpeptidation of peptidyl-alanyl moieties that are N-acyl substituents of D-alanine.. The protein operates within cell wall biogenesis; peptidoglycan biosynthesis. Transpeptidase that catalyzes cross-linking of the peptidoglycan cell wall. Required for the regulation of cell length. The polypeptide is Peptidoglycan D,D-transpeptidase PbpA (pbpA) (Mycobacterium tuberculosis (strain CDC 1551 / Oshkosh)).